The primary structure comprises 137 residues: Basic phospholipase A2 homolog Bsc-K49 (137 aa).

An N-terminal signal peptide occupies residues 1-16; sequence MRTLWIVAVLLVGVEG. Cystine bridges form between Cys42–Cys131, Cys44–Cys60, Cys59–Cys111, Cys65–Cys137, Cys66–Cys104, Cys73–Cys97, and Cys91–Cys102. The tract at residues 121–133 is important for membrane-damaging activities in eukaryotes and bacteria; heparin-binding; that stretch reads KNYKITMKMFCKK.

Belongs to the phospholipase A2 family. Group II subfamily. K49 sub-subfamily. In terms of assembly, homodimer; non-covalently linked. Expressed by the venom gland.

The protein localises to the secreted. In terms of biological role, snake venom phospholipase A2 that lacks enzymatic activity. Is myotoxic, and displays edema-inducing activities. A model of myotoxic mechanism has been proposed: an apo Lys49-PLA2 is activated by the entrance of a hydrophobic molecule (e.g. fatty acid) at the hydrophobic channel of the protein leading to a reorientation of a monomer. This reorientation causes a transition between 'inactive' to 'active' states, causing alignment of C-terminal and membrane-docking sites (MDoS) side-by-side and putting the membrane-disruption sites (MDiS) in the same plane, exposed to solvent and in a symmetric position for both monomers. The MDoS region stabilizes the toxin on membrane by the interaction of charged residues with phospholipid head groups. Subsequently, the MDiS region destabilizes the membrane with penetration of hydrophobic residues. This insertion causes a disorganization of the membrane, allowing an uncontrolled influx of ions (i.e. calcium and sodium), and eventually triggering irreversible intracellular alterations and cell death. This chain is Basic phospholipase A2 homolog Bsc-K49, found in Bothriechis schlegelii (Eyelash palm pitviper).